Here is a 776-residue protein sequence, read N- to C-terminus: Cilium assembly protein DZIP1L (776 aa).

The C2H2-type zinc-finger motif lies at 166 to 189 (HTCHLCDKTFMNATFLRGHIQRRH). Residues 196 to 450 (GKQKQEQQLG…RKVLAALRNN (255 aa)) are a coiled coil. Phosphoserine is present on residues serine 425 and serine 426. Residues 520-776 (SRAKKRWEGT…SGSRPRIPGW (257 aa)) form a disordered region. Residues 600–618 (GPSSTPVSPGPGLSTPPFS) show a composition bias toward low complexity. The span at 652-683 (WSDSETSEESAQSPGKGSDGLASSATLVQSMV) shows a compositional bias: polar residues. Positions 685–694 (NLEKQLETPA) are enriched in basic and acidic residues. Over residues 709 to 721 (TALQRSSTPARKT) the composition is skewed to polar residues.

The protein belongs to the DZIP C2H2-type zinc-finger protein family. Interacts with SEPTIN2.

It is found in the cytoplasm. The protein localises to the cytoskeleton. It localises to the cilium basal body. The protein resides in the microtubule organizing center. Its subcellular location is the centrosome. It is found in the centriole. Its function is as follows. Involved in primary cilium formation. Probably acts as a transition zone protein required for localization of PKD1/PC1 and PKD2/PC2 to the ciliary membrane. The protein is Cilium assembly protein DZIP1L of Rattus norvegicus (Rat).